A 118-amino-acid chain; its full sequence is Large ribosomal subunit protein uL22 (118 aa).

It belongs to the universal ribosomal protein uL22 family. Part of the 50S ribosomal subunit.

Its function is as follows. This protein binds specifically to 23S rRNA; its binding is stimulated by other ribosomal proteins, e.g. L4, L17, and L20. It is important during the early stages of 50S assembly. It makes multiple contacts with different domains of the 23S rRNA in the assembled 50S subunit and ribosome. In terms of biological role, the globular domain of the protein is located near the polypeptide exit tunnel on the outside of the subunit, while an extended beta-hairpin is found that lines the wall of the exit tunnel in the center of the 70S ribosome. The protein is Large ribosomal subunit protein uL22 of Chlorobium limicola (strain DSM 245 / NBRC 103803 / 6330).